The following is a 508-amino-acid chain: Inosine-5'-monophosphate dehydrogenase (508 aa).

2 consecutive CBS domains span residues 111–170 and 174–230; these read FITD…EITL and MTTN…PDAS. NAD(+) contacts are provided by residues aspartate 267 and 317–319; that span reads GMG. The K(+) site is built by glycine 319 and glycine 321. Serine 322 serves as a coordination point for IMP. K(+) is bound at residue cysteine 324. Catalysis depends on cysteine 324, which acts as the Thioimidate intermediate. IMP contacts are provided by residues 357-359, 380-381, and 404-408; these read DGG, GF, and YRGMA. Residue arginine 420 is the Proton acceptor of the active site. Glutamine 432 contributes to the IMP binding site. Glycine 492 provides a ligand contact to K(+).

This sequence belongs to the IMPDH/GMPR family. In terms of assembly, homotetramer. The cofactor is K(+).

It carries out the reaction IMP + NAD(+) + H2O = XMP + NADH + H(+). It participates in purine metabolism; XMP biosynthesis via de novo pathway; XMP from IMP: step 1/1. With respect to regulation, mycophenolic acid (MPA) is a non-competitive inhibitor that prevents formation of the closed enzyme conformation by binding to the same site as the amobile flap. In contrast, mizoribine monophosphate (MZP) is a competitive inhibitor that induces the closed conformation. MPA is a potent inhibitor of mammalian IMPDHs but a poor inhibitor of the bacterial enzymes. MZP is a more potent inhibitor of bacterial IMPDH. In terms of biological role, catalyzes the conversion of inosine 5'-phosphate (IMP) to xanthosine 5'-phosphate (XMP), the first committed and rate-limiting step in the de novo synthesis of guanine nucleotides, and therefore plays an important role in the regulation of cell growth. The chain is Inosine-5'-monophosphate dehydrogenase from Leptospira interrogans serogroup Icterohaemorrhagiae serovar Lai (strain 56601).